Here is a 573-residue protein sequence, read N- to C-terminus: MAKTNKQMSEELDKKLDALEYLKDESNYLRGTIEQGLADPLTGAISDDDTKLLKFHGSYQQDDRDLRDERRKQKLEPAYSFMIRVRLPGGTATPEQWLAMDDISNNYANQTLKLTTRQTFQFHGILKRNLKTSMKKINESVLDTIAACGDVNRNTMCNPNPYQSHIHKEINNYATKISDHLLPKTNAYHEIWLDGEKVLDSSEEIEPMYGKKYLPRKFKIGIALPPSNDIDVYSQDIGLIGIVEDETLVGFNVTVGGGMGMTHGNTDTYPQVGRLAGFVPKEQVVDVCEKILTIQRDYGNRENRKNARFKYTVDRLGVDKVVEELNTRLGWEIEEPRDFEFEHNGDRLGWIEGDKGVWNYTLFIQNGRVKDTEDYQLKTALRKIAETHTGDFRLSPNQNLIIANVTPEKKEEIQSLIDQYGLTDGKNYTGLRRNSMACVAFPTCGLAMAESERYLPSLISKIEDLLDEAGVDDEEITIRMTGCPNGCARPALAEIAFIGKAPGKYNMYLGGGFKGERLNKLYKENIGEQEILESLRPILMDYGKERLEGEHFGDFVIRSGVVAKVHGGQDFHS.

Residues Cys-438, Cys-444, Cys-483, and Cys-487 each contribute to the [4Fe-4S] cluster site. Residue Cys-487 participates in siroheme binding.

The protein belongs to the nitrite and sulfite reductase 4Fe-4S domain family. As to quaternary structure, alpha(8)-beta(8). The alpha component is a flavoprotein, the beta component is a hemoprotein. Siroheme serves as cofactor. The cofactor is [4Fe-4S] cluster.

The catalysed reaction is hydrogen sulfide + 3 NADP(+) + 3 H2O = sulfite + 3 NADPH + 4 H(+). It functions in the pathway sulfur metabolism; hydrogen sulfide biosynthesis; hydrogen sulfide from sulfite (NADPH route): step 1/1. In terms of biological role, component of the sulfite reductase complex that catalyzes the 6-electron reduction of sulfite to sulfide. This is one of several activities required for the biosynthesis of L-cysteine from sulfate. This chain is Sulfite reductase [NADPH] hemoprotein beta-component, found in Staphylococcus haemolyticus (strain JCSC1435).